We begin with the raw amino-acid sequence, 473 residues long: Trigger factor (473 aa).

The PPIase FKBP-type domain maps to 174 to 261; sequence GDIAVVSFKG…LKDLKEKELP (88 aa). A disordered region spans residues 437 to 473; it reads EISEKVTKSTTKSKTKSKTKKESQAKSEPNKKKKEKK. The span at 456–466 shows a compositional bias: basic and acidic residues; that stretch reads KKESQAKSEPN.

The protein belongs to the FKBP-type PPIase family. Tig subfamily.

It localises to the cytoplasm. It catalyses the reaction [protein]-peptidylproline (omega=180) = [protein]-peptidylproline (omega=0). Its function is as follows. Involved in protein export. Acts as a chaperone by maintaining the newly synthesized protein in an open conformation. Functions as a peptidyl-prolyl cis-trans isomerase. The chain is Trigger factor from Prochlorococcus marinus (strain MIT 9515).